A 118-amino-acid polypeptide reads, in one-letter code: Large ribosomal subunit protein bL20 (118 aa).

The protein belongs to the bacterial ribosomal protein bL20 family.

Its function is as follows. Binds directly to 23S ribosomal RNA and is necessary for the in vitro assembly process of the 50S ribosomal subunit. It is not involved in the protein synthesizing functions of that subunit. This chain is Large ribosomal subunit protein bL20, found in Oceanobacillus iheyensis (strain DSM 14371 / CIP 107618 / JCM 11309 / KCTC 3954 / HTE831).